The primary structure comprises 101 residues: MAPPTRRLLNAALLLLLLLMATSHQPSGTVVARELRCQCLKTLPRVDFENIQSLTVTPPGPHCTQTEVIATLKDGQEVCLNPQAPRLQKIIQKLLKSDKSS.

An N-terminal signal peptide occupies residues 1–32; the sequence is MAPPTRRLLNAALLLLLLLMATSHQPSGTVVA. Disulfide bonds link Cys37-Cys63 and Cys39-Cys79.

This sequence belongs to the intercrine alpha (chemokine CxC) family.

Its subcellular location is the secreted. In terms of biological role, ligand for CXCR2. Has chemotactic activity for neutrophils. May play a role in inflammation and exert its effects on endothelial cells in an autocrine fashion. The protein is C-X-C motif chemokine 3 (Cxcl3) of Rattus norvegicus (Rat).